The chain runs to 572 residues: Neuronal acetylcholine receptor subunit alpha-9-I (572 aa).

The N-terminal stretch at 1-19 (MKTVVLLTWISCWIDVCTS) is a signal peptide. The Extracellular portion of the chain corresponds to 20 to 232 (AQGRYAQKLL…YTLHLKRRSL (213 aa)). Residue N51 is glycosylated (N-linked (GlcNAc...) asparagine). A disulfide bond links C149 and C163. N-linked (GlcNAc...) asparagine glycosylation is present at N164. Residues C213 and C214 are joined by a disulfide bond. A run of 3 helical transmembrane segments spans residues 233 to 253 (FYIFNLLLPCFLISFLAPLGF), 263 to 283 (VSLGVTVLLALTVFQLMVAES), and 297 to 317 (YIATMTMITASTSLTIFIMNI). Residues 318-550 (HFCGAEAKPV…WKKVAKVMDR (233 aa)) lie on the Cytoplasmic side of the membrane. Residues 405–458 (GHLQNHHSTHQNHLDNCRYANGGHRDDHYSNRSNQNHHSNRSQTSKGEGGEEKR) are disordered. Residues 435 to 447 (NRSNQNHHSNRSQ) show a composition bias toward low complexity. A helical transmembrane segment spans residues 551–571 (FFMWIFFIMVFLMSILIIGKA).

This sequence belongs to the ligand-gated ion channel (TC 1.A.9) family. Acetylcholine receptor (TC 1.A.9.1) subfamily. Expressed in the liver, olfactory mucosa, pituitary gland, hair cells of the saccule and spleen.

It localises to the postsynaptic cell membrane. The protein resides in the cell membrane. The chain is Neuronal acetylcholine receptor subunit alpha-9-I (nachra9) from Oncorhynchus mykiss (Rainbow trout).